The chain runs to 249 residues: DNA repair protein RecO (249 aa).

The protein belongs to the RecO family.

In terms of biological role, involved in DNA repair and RecF pathway recombination. The sequence is that of DNA repair protein RecO from Rhodopseudomonas palustris (strain BisB5).